The sequence spans 619 residues: UvrABC system protein C (619 aa).

One can recognise a GIY-YIG domain in the interval 20-98 (TAPGVYRMYA…IKSLSPRYNV (79 aa)). In terms of domain architecture, UVR spans 207–242 (DQLGEEIMHSMQQASEALEFERAARLRDLLSSLRSM).

Belongs to the UvrC family. As to quaternary structure, interacts with UvrB in an incision complex.

It is found in the cytoplasm. Its function is as follows. The UvrABC repair system catalyzes the recognition and processing of DNA lesions. UvrC both incises the 5' and 3' sides of the lesion. The N-terminal half is responsible for the 3' incision and the C-terminal half is responsible for the 5' incision. The chain is UvrABC system protein C from Xanthomonas axonopodis pv. citri (strain 306).